A 381-amino-acid chain; its full sequence is Homoserine O-succinyltransferase (381 aa).

The region spanning Asn-45–Asp-360 is the AB hydrolase-1 domain. Catalysis depends on Ser-151, which acts as the Nucleophile. Position 221 (Arg-221) interacts with substrate. Residues Asp-321 and His-354 contribute to the active site. Asp-355 lines the substrate pocket.

Belongs to the AB hydrolase superfamily. MetX family. Homodimer.

It is found in the cytoplasm. It catalyses the reaction L-homoserine + succinyl-CoA = O-succinyl-L-homoserine + CoA. The protein operates within amino-acid biosynthesis; L-methionine biosynthesis via de novo pathway; O-succinyl-L-homoserine from L-homoserine: step 1/1. In terms of biological role, transfers a succinyl group from succinyl-CoA to L-homoserine, forming succinyl-L-homoserine. The chain is Homoserine O-succinyltransferase from Paraburkholderia phytofirmans (strain DSM 17436 / LMG 22146 / PsJN) (Burkholderia phytofirmans).